The following is a 213-amino-acid chain: ATP phosphoribosyltransferase (213 aa).

The protein belongs to the ATP phosphoribosyltransferase family. Short subfamily. In terms of assembly, heteromultimer composed of HisG and HisZ subunits.

It is found in the cytoplasm. It carries out the reaction 1-(5-phospho-beta-D-ribosyl)-ATP + diphosphate = 5-phospho-alpha-D-ribose 1-diphosphate + ATP. Its pathway is amino-acid biosynthesis; L-histidine biosynthesis; L-histidine from 5-phospho-alpha-D-ribose 1-diphosphate: step 1/9. Catalyzes the condensation of ATP and 5-phosphoribose 1-diphosphate to form N'-(5'-phosphoribosyl)-ATP (PR-ATP). Has a crucial role in the pathway because the rate of histidine biosynthesis seems to be controlled primarily by regulation of HisG enzymatic activity. The protein is ATP phosphoribosyltransferase of Teredinibacter turnerae (strain ATCC 39867 / T7901).